Here is a 570-residue protein sequence, read N- to C-terminus: MIPPEIRRSVLLQKAIKLALAGTLLTFASFSATAADPSSDTETPQPPDILLGPLFNDVQNAKLFPDQKTFADAIPNSDPLMILADYRMQRNQSGFDLRHFVDVNFTLPKAGEKYVPPAGQSLREHIDGLWPVLTRSTKNVEKWDSLLPLPESYVVPGGRFREIYYWDSYFTMLGLAESGHWDKVADMVANFGYEIDAWGHIPNGNRTYYLSRSQPPFFAFMVELLAQHEGDDALKEYLPQLQKEYAYWMEGVETLQPGQQNQRVVKLEDGSVLNRYWDDRDTPRPESWVEDIATAKSNPNRPATEIYRDLRSAAASGWDFSSRWMDNPQQLSTIRTTTIAPVDLNALLYQLEKTLARASAAAGDRAKASHYDALANARQKAIEMHLWNNKEGWYADYDLKNNKIRDQLTAAALFPLYVNAAAKDRAAKVAAAAQAHLLQPGGLATTSVKSGQQWDAPNGWAPLQWVAAEGLQNYGQDDVAMEVTWRFLTNVQHTYDREKKLVEKNDVSSTGTGGGGGEYPLQDGFGWTNGVTLKMLDLICPQEKPCDSVPSTRPASLSATPTKTPSAATQ.

The signal sequence occupies residues 1–34; sequence MIPPEIRRSVLLQKAIKLALAGTLLTFASFSATA. Substrate contacts are provided by residues R159, 166-167, N203, 212-214, 284-286, and G317; these read WD, RSQ, and RPE. Active-site proton donor/acceptor residues include D319 and E503. E518 is a binding site for substrate. The segment at 544–570 is disordered; sequence KPCDSVPSTRPASLSATPTKTPSAATQ. The span at 554–570 shows a compositional bias: low complexity; that stretch reads PASLSATPTKTPSAATQ.

This sequence belongs to the glycosyl hydrolase 37 family. As to quaternary structure, monomer.

It localises to the periplasm. The enzyme catalyses alpha,alpha-trehalose + H2O = alpha-D-glucose + beta-D-glucose. Its function is as follows. Provides the cells with the ability to utilize trehalose at high osmolarity by splitting it into glucose molecules that can subsequently be taken up by the phosphotransferase-mediated uptake system. The chain is Periplasmic trehalase from Salmonella typhimurium (strain LT2 / SGSC1412 / ATCC 700720).